The following is a 120-amino-acid chain: Membrane-anchored ubiquitin-fold protein 4 (120 aa).

One can recognise a Ubiquitin-like domain in the interval 7-73; that stretch reads VELKFRLYDG…LENGKTVAQC (67 aa). A lipid anchor (S-palmitoyl cysteine) is attached at Cys-115. Cys-117 carries the post-translational modification Cysteine methyl ester. The S-farnesyl cysteine moiety is linked to residue Cys-117. The propeptide at 118–120 is removed in mature form; it reads TIM.

As to expression, ubiquitous.

The protein localises to the cell membrane. Its function is as follows. May serve as docking site to facilitate the association of other proteins to the plasma membrane. The polypeptide is Membrane-anchored ubiquitin-fold protein 4 (MUB4) (Arabidopsis thaliana (Mouse-ear cress)).